Reading from the N-terminus, the 285-residue chain is tRNA (adenine(58)-N(1))-methyltransferase catalytic subunit TRMT61A (285 aa).

Ser2 carries the post-translational modification N-acetylserine. Substrate regions lie at residues 20-22, 35-42, 64-65, 85-89, and 110-117; these read LGH, QTQTRHGV, GW, QILYS, and SGTGSGSV. Residues Leu87, 114–116, Glu135, Arg140, 163–164, and Asp181 each bind S-adenosyl-L-methionine; these read SGS and DV. 2 substrate regions span residues 180–183 and 205–212; these read LDIP and SFSPCIEQ. Thr274 contacts substrate.

This sequence belongs to the class I-like SAM-binding methyltransferase superfamily. TRM61 family. As to quaternary structure, heterotetramer; composed of two copies of TRMT6 and two copies of TRMT61A.

The protein resides in the nucleus. It carries out the reaction adenosine(58) in tRNA + S-adenosyl-L-methionine = N(1)-methyladenosine(58) in tRNA + S-adenosyl-L-homocysteine + H(+). The catalysed reaction is an adenosine in mRNA + S-adenosyl-L-methionine = an N(1)-methyladenosine in mRNA + S-adenosyl-L-homocysteine + H(+). In terms of biological role, catalytic subunit of tRNA (adenine-N(1)-)-methyltransferase, which catalyzes the formation of N(1)-methyladenine at position 58 (m1A58) in initiator methionyl-tRNA. Catalytic subunit of mRNA N(1)-methyltransferase complex, which mediates methylation of adenosine residues at the N(1) position of a small subset of mRNAs: N(1) methylation takes place in tRNA T-loop-like structures of mRNAs and is only present at low stoichiometries. In Bos taurus (Bovine), this protein is tRNA (adenine(58)-N(1))-methyltransferase catalytic subunit TRMT61A (TRMT61A).